Here is a 421-residue protein sequence, read N- to C-terminus: Polymerase delta-interacting protein 3 (421 aa).

The residue at position 2 (Ala-2) is an N-acetylalanine. Residue Ser-5 is modified to Phosphoserine. Omega-N-methylarginine is present on Arg-33. Residues Ser-44 and Ser-127 each carry the phosphoserine modification. A Phosphothreonine modification is found at Thr-140. A Glycyl lysine isopeptide (Lys-Gly) (interchain with G-Cter in SUMO2) cross-link involves residue Lys-200. 3 positions are modified to phosphoserine: Ser-204, Ser-215, and Ser-217. Lys-223 is covalently cross-linked (Glycyl lysine isopeptide (Lys-Gly) (interchain with G-Cter in SUMO2)). Position 244 is a phosphoserine (Ser-244). Lys-248 is covalently cross-linked (Glycyl lysine isopeptide (Lys-Gly) (interchain with G-Cter in SUMO2)). The residue at position 275 (Ser-275) is a Phosphoserine. Positions 280–351 constitute an RRM domain; sequence TKMTVNNLHP…QPMKCNLHMN (72 aa). Basic and acidic residues predominate over residues 370 to 379; the sequence is SMKKESELPR. The segment at 370-393 is disordered; the sequence is SMKKESELPRRVNSASSSNPPAEV. Lys-372 is covalently cross-linked (Glycyl lysine isopeptide (Lys-Gly) (interchain with G-Cter in SUMO2)). Residues Ser-383 and Ser-385 each carry the phosphoserine; by RPS6KB1 modification. Lys-418 is covalently cross-linked (Glycyl lysine isopeptide (Lys-Gly) (interchain with G-Cter in SUMO2)).

Interacts with POLD2. Interacts with NCBP1 and EIF4A3. Associates with the multiprotein exon junction complex (EJC). Interacts with RPS6KB1 (activated). Interacts with ERH. Interacts with THOC2, DDX39B and ZC3H11A; the interactions are ATP-dependent and indicative for an association with the TREX complex. In terms of processing, phosphorylated at Ser-383 and Ser-385 by RPS6KB1.

The protein resides in the nucleus. The protein localises to the nucleus speckle. It is found in the cytoplasm. Functionally, is involved in regulation of translation. Is preferentially associated with CBC-bound spliced mRNA-protein complexes during the pioneer round of mRNA translation. Contributes to enhanced translational efficiency of spliced over nonspliced mRNAs. Recruits activated ribosomal protein S6 kinase beta-1 I/RPS6KB1 to newly synthesized mRNA. Involved in nuclear mRNA export; probably mediated by association with the TREX complex. The protein is Polymerase delta-interacting protein 3 (POLDIP3) of Homo sapiens (Human).